We begin with the raw amino-acid sequence, 329 residues long: Vitamin B12 import system permease protein BtuC (329 aa).

Transmembrane regions (helical) follow at residues 18–38 (WLLSLSLLVLLATLLSLCAGE), 64–84 (LAVLLVGASLALSGAVMQALF), 91–111 (PGLLGVSNGAGVGLIAAVLLG), 115–135 (LPGWSLGLCAIAGALTITLIL), 149–169 (LLAGVALGIICSALMTWAIYF), 191–208 (WQQSWLMTALIPVLIWIC), 243–263 (GWMVGVSVAMAGAIGFIGLVI), 277–297 (VLLPGCALAGAIALLLADVVA), and 305–325 (ELPIGVVTATLGAPIFIWLLL).

This sequence belongs to the binding-protein-dependent transport system permease family. FecCD subfamily. In terms of assembly, the complex is composed of two ATP-binding proteins (BtuD), two transmembrane proteins (BtuC) and a solute-binding protein (BtuF).

It is found in the cell inner membrane. Its function is as follows. Part of the ABC transporter complex BtuCDF involved in vitamin B12 import. Involved in the translocation of the substrate across the membrane. This chain is Vitamin B12 import system permease protein BtuC, found in Salmonella arizonae (strain ATCC BAA-731 / CDC346-86 / RSK2980).